Here is a 250-residue protein sequence, read N- to C-terminus: 1-(5-phosphoribosyl)-5-[(5-phosphoribosylamino)methylideneamino] imidazole-4-carboxamide isomerase (250 aa).

Catalysis depends on Asp12, which acts as the Proton acceptor. Asp134 serves as the catalytic Proton donor.

It belongs to the HisA/HisF family.

Its subcellular location is the cytoplasm. It catalyses the reaction 1-(5-phospho-beta-D-ribosyl)-5-[(5-phospho-beta-D-ribosylamino)methylideneamino]imidazole-4-carboxamide = 5-[(5-phospho-1-deoxy-D-ribulos-1-ylimino)methylamino]-1-(5-phospho-beta-D-ribosyl)imidazole-4-carboxamide. Its pathway is amino-acid biosynthesis; L-histidine biosynthesis; L-histidine from 5-phospho-alpha-D-ribose 1-diphosphate: step 4/9. The chain is 1-(5-phosphoribosyl)-5-[(5-phosphoribosylamino)methylideneamino] imidazole-4-carboxamide isomerase from Actinobacillus pleuropneumoniae serotype 7 (strain AP76).